A 1374-amino-acid polypeptide reads, in one-letter code: DNA-directed RNA polymerase subunit beta (1374 aa).

This sequence belongs to the RNA polymerase beta chain family. The RNAP catalytic core consists of 2 alpha, 1 beta, 1 beta' and 1 omega subunit. When a sigma factor is associated with the core the holoenzyme is formed, which can initiate transcription.

It carries out the reaction RNA(n) + a ribonucleoside 5'-triphosphate = RNA(n+1) + diphosphate. Its function is as follows. DNA-dependent RNA polymerase catalyzes the transcription of DNA into RNA using the four ribonucleoside triphosphates as substrates. The sequence is that of DNA-directed RNA polymerase subunit beta from Methylobacterium radiotolerans (strain ATCC 27329 / DSM 1819 / JCM 2831 / NBRC 15690 / NCIMB 10815 / 0-1).